Consider the following 405-residue polypeptide: Diaminopimelate decarboxylase (405 aa).

K46 carries the post-translational modification N6-(pyridoxal phosphate)lysine. Pyridoxal 5'-phosphate contacts are provided by residues G225 and 259–262; that span reads EPGR. Substrate is bound by residues R262, R298, and Y302. Residue C329 is the Proton donor of the active site. Residues E330 and Y358 each contribute to the substrate site. Pyridoxal 5'-phosphate is bound at residue Y358.

This sequence belongs to the Orn/Lys/Arg decarboxylase class-II family. LysA subfamily. As to quaternary structure, homodimer. It depends on pyridoxal 5'-phosphate as a cofactor.

It catalyses the reaction meso-2,6-diaminopimelate + H(+) = L-lysine + CO2. The protein operates within amino-acid biosynthesis; L-lysine biosynthesis via DAP pathway; L-lysine from DL-2,6-diaminopimelate: step 1/1. Functionally, specifically catalyzes the decarboxylation of meso-diaminopimelate (meso-DAP) to L-lysine. The polypeptide is Diaminopimelate decarboxylase (Helicobacter pylori (Campylobacter pylori)).